Consider the following 155-residue polypeptide: Endoribonuclease YbeY (155 aa).

The Zn(2+) site is built by His-120, His-124, and His-130.

This sequence belongs to the endoribonuclease YbeY family. Requires Zn(2+) as cofactor.

It localises to the cytoplasm. Functionally, single strand-specific metallo-endoribonuclease involved in late-stage 70S ribosome quality control and in maturation of the 3' terminus of the 16S rRNA. In Staphylococcus aureus (strain Mu3 / ATCC 700698), this protein is Endoribonuclease YbeY.